We begin with the raw amino-acid sequence, 281 residues long: CCAAT/enhancer-binding protein epsilon (281 aa).

The segment at methionine 1–leucine 30 is disordered. A Glycyl lysine isopeptide (Lys-Gly) (interchain with G-Cter in SUMO2) cross-link involves residue lysine 121. Serine 181 is modified (phosphoserine). Positions serine 204–isoleucine 267 constitute a bZIP domain. Residues arginine 208–arginine 228 are basic motif. The tract at residues leucine 230–leucine 237 is leucine-zipper.

Belongs to the bZIP family. C/EBP subfamily. In terms of assembly, binds DNA as a homodimer and as a heterodimer. Can form stable heterodimers with CEBPA, CEBPB and CEBPD. Interacts with GATA1 and SPI1. Interacts with SMARCD2. Phosphorylated. In terms of tissue distribution, strongest expression occurs in promyelocyte and late-myeloblast-like cell lines.

It is found in the nucleus. In terms of biological role, transcriptional activator. C/EBP are DNA-binding proteins that recognize two different motifs: the CCAAT homology common to many promoters and the enhanced core homology common to many enhancers. Required for the promyelocyte-myelocyte transition in myeloid differentiation. This chain is CCAAT/enhancer-binding protein epsilon (CEBPE), found in Homo sapiens (Human).